Here is a 481-residue protein sequence, read N- to C-terminus: Proline--tRNA ligase (481 aa).

It belongs to the class-II aminoacyl-tRNA synthetase family. ProS type 3 subfamily. In terms of assembly, homodimer.

It is found in the cytoplasm. It carries out the reaction tRNA(Pro) + L-proline + ATP = L-prolyl-tRNA(Pro) + AMP + diphosphate. In terms of biological role, catalyzes the attachment of proline to tRNA(Pro) in a two-step reaction: proline is first activated by ATP to form Pro-AMP and then transferred to the acceptor end of tRNA(Pro). In Chlorobaculum tepidum (strain ATCC 49652 / DSM 12025 / NBRC 103806 / TLS) (Chlorobium tepidum), this protein is Proline--tRNA ligase.